We begin with the raw amino-acid sequence, 150 residues long: Nucleoside diphosphate kinase (150 aa).

ATP-binding residues include Lys-9, Phe-57, Arg-85, Thr-91, Arg-102, and Asn-112. His-115 acts as the Pros-phosphohistidine intermediate in catalysis.

This sequence belongs to the NDK family. It depends on Mg(2+) as a cofactor.

It is found in the cytoplasm. It carries out the reaction a 2'-deoxyribonucleoside 5'-diphosphate + ATP = a 2'-deoxyribonucleoside 5'-triphosphate + ADP. The catalysed reaction is a ribonucleoside 5'-diphosphate + ATP = a ribonucleoside 5'-triphosphate + ADP. Its function is as follows. Major role in the synthesis of nucleoside triphosphates other than ATP. The ATP gamma phosphate is transferred to the NDP beta phosphate via a ping-pong mechanism, using a phosphorylated active-site intermediate. This Methanothermobacter thermautotrophicus (strain ATCC 29096 / DSM 1053 / JCM 10044 / NBRC 100330 / Delta H) (Methanobacterium thermoautotrophicum) protein is Nucleoside diphosphate kinase.